A 365-amino-acid polypeptide reads, in one-letter code: L-lactate oxidase (365 aa).

The 364-residue stretch at 2-365 folds into the FMN hydroxy acid dehydrogenase domain; it reads TAISSPINLF…QDIDTSFLHL (364 aa). Pyruvate is bound at residue Tyr28. Residues 81–83, Ser110, and Gln135 contribute to the FMN site; that span reads PMA. Residue Tyr137 participates in pyruvate binding. Thr163 contributes to the FMN binding site. Arg172 is a pyruvate binding site. FMN contacts are provided by Lys239 and Ser261. The pyruvate site is built by His263 and Arg266. The Proton acceptor role is filled by His263. Residues 294-298 and Arg318 contribute to the FMN site; that span reads DGGIR.

It belongs to the FMN-dependent alpha-hydroxy acid dehydrogenase family. As to quaternary structure, homotetramer. FMN is required as a cofactor.

The catalysed reaction is (S)-lactate + O2 = pyruvate + H2O2. The enzyme catalyses glyoxylate + O2 + H2O = oxalate + H2O2 + H(+). Functionally, catalyzes the oxidation of (S)-lactate (L-lactate) to pyruvate, with a reduction of O2 to H2O2. In extant N2-fixing cyanobacteria such as Nostoc, this enzyme primarily serves as an O2-scavenging enzyme, protecting nitrogenase that is extremely sensitive to O2, and is therefore an essential partner in N2 fixation. Also shows clear oxidase activity with glyoxylate in vitro, and low activity with glycerate, hydroxypyruvate and glycolate. The very low glycolate oxidase activity indicates that this enzyme is unlikely to be involved in photorespiratory glycolate metabolism, a pathway that seems to exist in this cyanobacterium, but in which the oxidation of glycolate is taken over by glycolate dehydrogenase (GlcD). Is not able to use D-lactate as substrate and does not show any dehydrogenase activity with NAD(+) or NADP(+). The protein is L-lactate oxidase of Nostoc sp. (strain PCC 7120 / SAG 25.82 / UTEX 2576).